The primary structure comprises 108 residues: uncharacterized protein (108 aa).

The next 3 membrane-spanning stretches (helical) occupy residues 24 to 44 (LWIT…GGLL), 55 to 75 (AHMA…YLAM), and 88 to 108 (RFEI…SIGI).

To cation A.eutrophus efflux system protein CzcD.

It localises to the cell membrane. This is an uncharacterized protein from Geobacillus stearothermophilus (Bacillus stearothermophilus).